Reading from the N-terminus, the 172-residue chain is uncharacterized protein (172 aa).

Residues 130-154 (EQEKGAAPQEGKDWQVISEEDKKNQ) are disordered.

This is an uncharacterized protein from Bacillus subtilis (strain 168).